Here is a 457-residue protein sequence, read N- to C-terminus: Tubulin gamma-2 chain (457 aa).

Residue 142-148 (AGGTGSG) participates in GTP binding.

It belongs to the tubulin family. Interacts with Ote. As to expression, expressed in nurse cells and oocytes of developing egg chambers.

The protein resides in the cytoplasm. The protein localises to the cytoskeleton. Its subcellular location is the microtubule organizing center. It is found in the centrosome. It localises to the spindle. Functionally, tubulin is the major constituent of microtubules. The gamma chain is found at microtubule organizing centers (MTOC) such as the spindle poles or the centrosome, suggesting that it is involved in the minus-end nucleation of microtubule assembly. Required for oocyte activation and consequently for organization of the female meiotic spindle. Essential for centrosome organization and assembly of biastral mitotic spindles in embryos. Plays a role in stabilizing the augmin complex on the meiotic spindle. In Drosophila melanogaster (Fruit fly), this protein is Tubulin gamma-2 chain (gammaTub37C).